Here is a 1406-residue protein sequence, read N- to C-terminus: MHQTLCLNPESLKMSACSDFVEHIWKPGSCKNCFCLRSDHQLVAGPPQPRAGSLPPPPRLPPRPENCRLEDEGVNSSPYSKPTIAVKPTMMSSEASDVWTEANLSAEVSQVIWRRAPGKLPLPKQEDAPVVYLGSFRGVQKPAGPSTSPDGNSRCPPAYTMVGLHNLEPRGERNIAFHPVSFPEEKAVHKEKPSFPYQDRPSTQESFRQKLAAFAGTTSGCHQGPGPLRESLPSEDDSDQRCSPSGDSEGGEYCSILDCCPGSPVAKAASQTAGSRGRHGGRDCSPTCWEQGKCSGPAEQEKRGPSFPKECCSQGPTAHPSCLGPKKLSLTSEAAISSDGLSCGSGSGSGSGASSPFVPHLESDYCSLMKEPAPEKQQDPGCPGVTPSRCLGLTGEPQPPAHPREATQPEPIYAESTKRKKAAPVPSKSQAKIEHAAAAQGQGQVCTGNAWAQKAASGWGRDSPDPTPQVSATITVMAAHPEEDHRTIYLSSPDSAVGVQWPRGPVSQNSEVGEEETSAGQGLSSRESHAHSASESKPKERPAIPPKLSKSSPVGSPVSPSAGGPPVSPLADLSDGSSGGSSIGPQPPSQGPADPAPSCRTNGVAISDPSRCPQPAASSASEQRRPRFQAGTWSRQCRIEEEEEVEQELLSHSWGRETKNGPTDHSNSTTWHRLHPTDGSSGQNSKVGTGMSKSASFAFEFPKDRSGIETFSPPPPPPKSRHLLKMNKSSSDLEKVSQGSAESLSPSFRGVHVSFTTGSTDSLASDSRTCSDGGPSSELAHSPTNSGKKLFAPVPFPSGSTEDVSPSGPQQPPPLPQKKIVSRAASSPDGFFWTQGSPKPGTASPKLNLSHSETNVHDESHFSYSLSPGNRHHPVFSSSDPLEKAFKGSGHWLPAAGLAGNRGGCGSPGLQCKGAPSASSSQLSVSSQASTGSTQLQLHGLLSNISSKEGTYAKLGGLYTQSLARLVAKCEDLFMGGQKKELHFNENNWSLFKLTCNKPCCDSGDAIYYCATCSEDPGSTYAVKICKAPEPKTVSYCSPSVPVHFNIQQDCGHFVASVPSSMLSSPDAPKDPVPALPTHPPAQEQDCVVVITREVPHQTASDFVRDSAASHQAEPEAYERRVCFLLLQLCNGLEHLKEHGIIHRDLCLENLLLVHCTLQAGPGPAPAPAPAPAPAAAAPPCSSAAPPAGGTLSPAAGPASPEGPREKQLPRLIISNFLKAKQKPGGTPNLQQKKSQARLAPEIVSASQYRKFDEFQTGILIYELLHQPNPFEVRAQLRERDYRQEDLPPLPALSLYSPGLQQLAHLLLEADPIKRIRIGEAKRVLQCLLWGPRRELVQQPGTSEEALCGTLHNWIDMKRALMMMKFAEKAVDRRRGVELEDWLCCQYLASAEPGALLQSLKLLQLL.

At Ser-148 the chain carries Phosphoserine. Positions 184–193 (EEKAVHKEKP) are enriched in basic and acidic residues. Disordered regions lie at residues 184–205 (EEKA…STQE) and 217–248 (TTSG…SGDS). A phosphotyrosine mark is found at Tyr-253, Tyr-365, and Tyr-413. Disordered stretches follow at residues 372–470 (PAPE…TPQV) and 484–854 (DHRT…HSET). Residues 526–542 (RESHAHSASESKPKERP) are compositionally biased toward basic and acidic residues. Residues 546–576 (PKLSKSSPVGSPVSPSAGGPPVSPLADLSDG) are compositionally biased toward low complexity. 2 stretches are compositionally biased toward polar residues: residues 660–671 (NGPTDHSNSTTW) and 678–695 (DGSS…SKSA). Ser-696 and Ser-745 each carry phosphoserine. 2 stretches are compositionally biased toward polar residues: residues 737–746 (SQGSAESLSP) and 754–770 (SFTT…SRTC). Phosphoserine is present on Ser-782. The span at 798–808 (SGSTEDVSPSG) shows a compositional bias: polar residues. Ser-826 carries the post-translational modification Phosphoserine. The interval 933–976 (STQLQLHGLLSNISSKEGTYAKLGGLYTQSLARLVAKCEDLFMG) is required for homodimerization. Residues 978-1329 (QKKELHFNEN…EAKRVLQCLL (352 aa)) form the Protein kinase domain. The span at 1163–1173 (GPAPAPAPAPA) shows a compositional bias: pro residues. Residues 1163-1206 (GPAPAPAPAPAPAAAAPPCSSAAPPAGGTLSPAAGPASPEGPRE) are disordered. Over residues 1174-1202 (PAAAAPPCSSAAPPAGGTLSPAAGPASPE) the composition is skewed to low complexity. Residues 1331 to 1406 (GPRRELVQQP…LQSLKLLQLL (76 aa)) form a required for homodimerization region.

It belongs to the protein kinase superfamily. As to quaternary structure, homodimer. Dimerization leads to the catalytic activation of CSK. Interacts (via C-terminus) with RND2. Interacts with CSK (via SH2 domain) in a Tyr-413 phosphorylation-dependent manner; this interaction potentiates kinase activity of CSK. Interacts with PEAK1. Interacts with NOTCH1 intracellular domain (N1ICD). Forms a complex with N1ICD and MAML1, in a MAML1-dependent manner. Phosphorylated by CSK on Tyr-253, Tyr-365, and Tyr-413; Tyr-413 is a primary site of phosphorylation.

The protein resides in the cytoplasm. It localises to the cell junction. Its subcellular location is the focal adhesion. It is found in the nucleus. Its function is as follows. Catalytically inactive protein kinase that acts as a scaffold protein. Functions as an effector of the small GTPase RND2, which stimulates RhoA activity and inhibits NGF-induced neurite outgrowth. Promotes Src family kinase (SFK) signaling by regulating the subcellular localization of CSK, a negative regulator of these kinases, leading to the regulation of cell morphology and motility by a CSK-dependent mechanism. Acts as a critical coactivator of Notch signaling. The chain is Inactive tyrosine-protein kinase PRAG1 from Homo sapiens (Human).